A 338-amino-acid polypeptide reads, in one-letter code: 1-aminocyclopropane-1-carboxylate deaminase (338 aa).

Lysine 51 bears the N6-(pyridoxal phosphate)lysine mark. Serine 78 functions as the Nucleophile in the catalytic mechanism.

Belongs to the ACC deaminase/D-cysteine desulfhydrase family. As to quaternary structure, homotrimer. The cofactor is pyridoxal 5'-phosphate.

It carries out the reaction 1-aminocyclopropane-1-carboxylate + H2O = 2-oxobutanoate + NH4(+). Its function is as follows. Catalyzes a cyclopropane ring-opening reaction, the irreversible conversion of 1-aminocyclopropane-1-carboxylate (ACC) to ammonia and alpha-ketobutyrate. Allows growth on ACC as a nitrogen source. This is 1-aminocyclopropane-1-carboxylate deaminase from Burkholderia multivorans (strain ATCC 17616 / 249).